Consider the following 255-residue polypeptide: MKFFFFSFINYKVLNDAARPWQIGFQDPATPIMEGIVNLHHDIIFFLIIIIIFVSWILFRTLFLFNSKTNPVAYNFSHGTFIELLWTLTPSLVLIGIAVPSFALLYSIDEIIDPAITIKAVGRQWYWSYEYSDYVNEENEFLAFHSYILPEEDLELGQFRLLEVDNRIIIPVNTHIRIIVTGADVIHSWAVPSLGVKCDAIPGRLNQISFFIKREGIYYGQCSEICGVNHGFMPIVIEAVSFDDYIRWVQNKILD.

Topologically, residues 1-42 are mitochondrial intermembrane; sequence MKFFFFSFINYKVLNDAARPWQIGFQDPATPIMEGIVNLHHD. The helical transmembrane segment at 43 to 63 threads the bilayer; the sequence is IIFFLIIIIIFVSWILFRTLF. The Mitochondrial matrix segment spans residues 64 to 83; it reads LFNSKTNPVAYNFSHGTFIE. Residues 84–104 traverse the membrane as a helical segment; that stretch reads LLWTLTPSLVLIGIAVPSFAL. The Mitochondrial intermembrane portion of the chain corresponds to 105 to 255; that stretch reads LYSIDEIIDP…IRWVQNKILD (151 aa). Cu cation is bound by residues H187, C222, E224, C226, H230, and M233. Residue E224 coordinates Mg(2+).

Belongs to the cytochrome c oxidase subunit 2 family. In terms of assembly, component of the cytochrome c oxidase (complex IV, CIV), a multisubunit enzyme composed of a catalytic core of 3 subunits and several supernumerary subunits. The complex exists as a monomer or a dimer and forms supercomplexes (SCs) in the inner mitochondrial membrane with ubiquinol-cytochrome c oxidoreductase (cytochrome b-c1 complex, complex III, CIII). Cu cation serves as cofactor.

It localises to the mitochondrion inner membrane. The enzyme catalyses 4 Fe(II)-[cytochrome c] + O2 + 8 H(+)(in) = 4 Fe(III)-[cytochrome c] + 2 H2O + 4 H(+)(out). Functionally, component of the cytochrome c oxidase, the last enzyme in the mitochondrial electron transport chain which drives oxidative phosphorylation. The respiratory chain contains 3 multisubunit complexes succinate dehydrogenase (complex II, CII), ubiquinol-cytochrome c oxidoreductase (cytochrome b-c1 complex, complex III, CIII) and cytochrome c oxidase (complex IV, CIV), that cooperate to transfer electrons derived from NADH and succinate to molecular oxygen, creating an electrochemical gradient over the inner membrane that drives transmembrane transport and the ATP synthase. Cytochrome c oxidase is the component of the respiratory chain that catalyzes the reduction of oxygen to water. Electrons originating from reduced cytochrome c in the intermembrane space (IMS) are transferred via the dinuclear copper A center (CU(A)) of subunit 2 and heme A of subunit 1 to the active site in subunit 1, a binuclear center (BNC) formed by heme A3 and copper B (CU(B)). The BNC reduces molecular oxygen to 2 water molecules using 4 electrons from cytochrome c in the IMS and 4 protons from the mitochondrial matrix. This chain is Cytochrome c oxidase subunit 2 (COX2), found in Cyanidium caldarium (Red alga).